A 139-amino-acid polypeptide reads, in one-letter code: Maintenance of telomere capping protein 7 (139 aa).

2 helical membrane-spanning segments follow: residues 13–33 (SHHV…FVLL) and 42–62 (FYFL…FVFI). Residues 94 to 121 (RSVANPALPPQKKKKKKKKGTLRTGEVE) are disordered. Residues 104-114 (QKKKKKKKKGT) are compositionally biased toward basic residues.

It is found in the membrane. In terms of biological role, may be involved in telomere capping. The polypeptide is Maintenance of telomere capping protein 7 (MTC7) (Saccharomyces cerevisiae (strain ATCC 204508 / S288c) (Baker's yeast)).